The following is a 123-amino-acid chain: Large ribosomal subunit protein uL18 (123 aa).

Belongs to the universal ribosomal protein uL18 family. Part of the 50S ribosomal subunit; part of the 5S rRNA/L5/L18/L25 subcomplex. Contacts the 5S and 23S rRNAs.

In terms of biological role, this is one of the proteins that bind and probably mediate the attachment of the 5S RNA into the large ribosomal subunit, where it forms part of the central protuberance. In Wolbachia pipientis wMel, this protein is Large ribosomal subunit protein uL18.